The sequence spans 137 residues: ATP synthase epsilon chain, chloroplastic (137 aa).

The protein belongs to the ATPase epsilon chain family. As to quaternary structure, F-type ATPases have 2 components, CF(1) - the catalytic core - and CF(0) - the membrane proton channel. CF(1) has five subunits: alpha(3), beta(3), gamma(1), delta(1), epsilon(1). CF(0) has three main subunits: a, b and c.

The protein resides in the plastid. It localises to the chloroplast thylakoid membrane. In terms of biological role, produces ATP from ADP in the presence of a proton gradient across the membrane. In Pinus koraiensis (Korean pine), this protein is ATP synthase epsilon chain, chloroplastic.